The primary structure comprises 360 residues: Type II methyltransferase M.BglII (360 aa).

Residues 316 to 341 (TRQRKGSKPSLDSKAHPEEHHKKEIV) are disordered. The segment covering 326 to 341 (LDSKAHPEEHHKKEIV) has biased composition (basic and acidic residues).

This sequence belongs to the N(4)/N(6)-methyltransferase family. N(4) subfamily.

The catalysed reaction is a 2'-deoxycytidine in DNA + S-adenosyl-L-methionine = an N(4)-methyl-2'-deoxycytidine in DNA + S-adenosyl-L-homocysteine + H(+). A beta subtype methylase, recognizes the double-stranded sequence 5'-AGATCT-3', methylates C-5 on both strands, and protects the DNA from cleavage by the BglII endonuclease. The sequence is that of Type II methyltransferase M.BglII from Bacillus subtilis.